Consider the following 100-residue polypeptide: Urease subunit gamma (100 aa).

The protein belongs to the urease gamma subunit family. In terms of assembly, heterotrimer of UreA (gamma), UreB (beta) and UreC (alpha) subunits. Three heterotrimers associate to form the active enzyme.

It is found in the cytoplasm. It catalyses the reaction urea + 2 H2O + H(+) = hydrogencarbonate + 2 NH4(+). It functions in the pathway nitrogen metabolism; urea degradation; CO(2) and NH(3) from urea (urease route): step 1/1. This Saccharophagus degradans (strain 2-40 / ATCC 43961 / DSM 17024) protein is Urease subunit gamma.